A 256-amino-acid polypeptide reads, in one-letter code: Acetyl-coenzyme A carboxylase carboxyl transferase subunit alpha (256 aa).

Residues 1-236 enclose the CoA carboxyltransferase C-terminal domain; that stretch reads MSDVARILKE…KTAIVDELAE (236 aa).

It belongs to the AccA family. In terms of assembly, acetyl-CoA carboxylase is a heterohexamer composed of biotin carboxyl carrier protein (AccB), biotin carboxylase (AccC) and two subunits each of ACCase subunit alpha (AccA) and ACCase subunit beta (AccD).

The protein localises to the cytoplasm. The enzyme catalyses N(6)-carboxybiotinyl-L-lysyl-[protein] + acetyl-CoA = N(6)-biotinyl-L-lysyl-[protein] + malonyl-CoA. It functions in the pathway lipid metabolism; malonyl-CoA biosynthesis; malonyl-CoA from acetyl-CoA: step 1/1. Functionally, component of the acetyl coenzyme A carboxylase (ACC) complex. First, biotin carboxylase catalyzes the carboxylation of biotin on its carrier protein (BCCP) and then the CO(2) group is transferred by the carboxyltransferase to acetyl-CoA to form malonyl-CoA. In Streptococcus thermophilus (strain ATCC BAA-250 / LMG 18311), this protein is Acetyl-coenzyme A carboxylase carboxyl transferase subunit alpha.